A 218-amino-acid polypeptide reads, in one-letter code: Thiopurine S-methyltransferase (218 aa).

Tryptophan 10, leucine 45, glutamate 66, and arginine 123 together coordinate S-adenosyl-L-methionine.

This sequence belongs to the class I-like SAM-binding methyltransferase superfamily. TPMT family.

The protein resides in the cytoplasm. The enzyme catalyses S-adenosyl-L-methionine + a thiopurine = S-adenosyl-L-homocysteine + a thiopurine S-methylether.. The chain is Thiopurine S-methyltransferase from Shewanella baltica (strain OS223).